The chain runs to 243 residues: Ribosomal RNA small subunit methyltransferase J (243 aa).

Residues glutamate 112–arginine 113 and aspartate 164 each bind S-adenosyl-L-methionine.

Belongs to the methyltransferase superfamily. RsmJ family.

The protein localises to the cytoplasm. It carries out the reaction guanosine(1516) in 16S rRNA + S-adenosyl-L-methionine = N(2)-methylguanosine(1516) in 16S rRNA + S-adenosyl-L-homocysteine + H(+). In terms of biological role, specifically methylates the guanosine in position 1516 of 16S rRNA. The protein is Ribosomal RNA small subunit methyltransferase J of Legionella pneumophila (strain Lens).